Reading from the N-terminus, the 179-residue chain is Large ribosomal subunit protein uL5 (179 aa).

Belongs to the universal ribosomal protein uL5 family. In terms of assembly, part of the 50S ribosomal subunit; part of the 5S rRNA/L5/L18/L25 subcomplex. Contacts the 5S rRNA and the P site tRNA. Forms a bridge to the 30S subunit in the 70S ribosome.

This is one of the proteins that bind and probably mediate the attachment of the 5S RNA into the large ribosomal subunit, where it forms part of the central protuberance. In the 70S ribosome it contacts protein S13 of the 30S subunit (bridge B1b), connecting the 2 subunits; this bridge is implicated in subunit movement. Contacts the P site tRNA; the 5S rRNA and some of its associated proteins might help stabilize positioning of ribosome-bound tRNAs. In Xylella fastidiosa (strain 9a5c), this protein is Large ribosomal subunit protein uL5.